We begin with the raw amino-acid sequence, 518 residues long: Motile sperm domain-containing protein 2 (518 aa).

Over 1–496 the chain is Cytoplasmic; the sequence is MAENNAQNKA…QLQRSIWFQQ (496 aa). A CRAL-TRIO domain is found at 85–239; sequence IPRWLLELGG…HMGGTDPFKY (155 aa). Residues 252-312 are disordered; the sequence is PLCENGPIAS…KDENEKVDSK (61 aa). 2 stretches are compositionally biased toward basic and acidic residues: residues 265–279 and 300–312; these read TSSK…KETL and VSKK…VDSK. Residues 327–445 enclose the MSP domain; it reads LLHISPAEEL…MEHRLRCHTV (119 aa). Residues 365–366 are required for FFAT motif binding and phosphorylated FFAT motif binding; the sequence is RT. Residues 497–518 form a helical; Anchor for type IV membrane protein membrane-spanning segment; sequence LLLALTMVLLDFVVSFFYSLYN.

Homooligomer. Interacts (via MSP domain) with STARD3NL (via FFAT motif), RMDN3 (via FFAT motif), OSBPL1A (via FFAT motif) and CERT1 (via FFAT motif). Interacts (via MSP domain) with STARD3 (via phosphorylated FFAT motif); this interaction depends on the critical phosphorylation of STARD3 on 'Ser-209'. Interacts with RB1CC1 (via phosphorylated FFAT motif), MIGA2 (via phosphorylated FFAT motif) and OSBPL1A (via FFAT motif).

It is found in the endoplasmic reticulum membrane. Its function is as follows. Endoplasmic reticulum-anchored protein that mediates the formation of contact sites between the endoplasmic (ER) and endosomes, mitochondria or Golgi through interaction with conventional- and phosphorylated-FFAT-containing organelle-bound proteins. In addition, forms endoplasmic reticulum (ER)-lipid droplets (LDs) contacts through a direct protein-membrane interaction and participates in LDs homeostasis. The attachment mechanism involves an amphipathic helix that has an affinity for lipid packing defects present at the surface of LDs. Promotes migration of primary monocytes and neutrophils, in response to various chemokines. The chain is Motile sperm domain-containing protein 2 from Mus musculus (Mouse).